The sequence spans 574 residues: Meiotically up-regulated gene 72 protein (574 aa).

The segment at 339–374 (VRAGTPQSSPNFNPAMRRSPVGAASRSPSRSTIGIS) is disordered. Residue T343 is modified to Phosphothreonine. Residues 364-374 (RSPSRSTIGIS) are compositionally biased toward polar residues. Residue S392 is modified to Phosphoserine. Disordered regions lie at residues 422-451 (TSPS…NKAG) and 495-574 (RNRR…RRMD). Positions 541-554 (LYDTSRYPTRNSKP) are enriched in polar residues.

The protein localises to the cytoplasm. In terms of biological role, has a role in meiosis. The protein is Meiotically up-regulated gene 72 protein (mug72) of Schizosaccharomyces pombe (strain 972 / ATCC 24843) (Fission yeast).